The sequence spans 467 residues: Acetaldehyde dehydrogenase (acetylating) EutE (467 aa).

Positions 1-19 (MNQQDIEQVVKAVLLKMKD) are targets protein to the BMC.

Belongs to the EutE/PduP family. Interacts with EutS, which targets it to the interior of the BMC.

The protein localises to the bacterial microcompartment. It carries out the reaction acetaldehyde + NAD(+) + CoA = acetyl-CoA + NADH + H(+). The protein operates within amine and polyamine degradation; ethanolamine degradation. Acts as the second step in ethanolamine degradation by converting acetaldehyde into acetyl-CoA. Has a very strong preference for NAD(+) over NADP(+) in both catalytic directions. May play a role in bacterial microcompartment (BMC) assembly or maintenance. Directly targeted to the BMC. In terms of biological role, expression of the eut operon allows this bacteria to use ethanolamine (EA) as a carbon, nitrogen and energy source. It relies on cobalamin (vitamin B12) both as a cofactor for the ethanolamine ammonia-lyase (EAL) activity and to induce the operon. EA enhances bacterial survival in macrophages in a concentration-dependent manner, suggesting it is an important nutrient during infection. This chain is Acetaldehyde dehydrogenase (acetylating) EutE, found in Salmonella typhimurium (strain LT2 / SGSC1412 / ATCC 700720).